Reading from the N-terminus, the 247-residue chain is Probable transcriptional regulatory protein MS0710 (247 aa).

It belongs to the TACO1 family.

It localises to the cytoplasm. The sequence is that of Probable transcriptional regulatory protein MS0710 from Mannheimia succiniciproducens (strain KCTC 0769BP / MBEL55E).